Consider the following 74-residue polypeptide: RNA-binding protein Hfq (74 aa).

In terms of domain architecture, Sm spans 9–69; sequence DQFLNQLRKE…ISTFAPQKNV (61 aa).

It belongs to the Hfq family. In terms of assembly, homohexamer.

In terms of biological role, RNA chaperone that binds small regulatory RNA (sRNAs) and mRNAs to facilitate mRNA translational regulation in response to envelope stress, environmental stress and changes in metabolite concentrations. Also binds with high specificity to tRNAs. This chain is RNA-binding protein Hfq, found in Anoxybacillus flavithermus (strain DSM 21510 / WK1).